The chain runs to 224 residues: Type VII secretion system protein EsaE (224 aa).

Interacts with EssD.

In terms of biological role, component of the type VII secretion system (Ess). Plays a role in Esx protein secretion. Plays an essential role in the processing and secretion of EssD. In Staphylococcus aureus (strain USA300), this protein is Type VII secretion system protein EsaE.